Here is a 423-residue protein sequence, read N- to C-terminus: UPF0229 protein PST_0721 (423 aa).

The disordered stretch occupies residues 84–109 (AGERIPRPQGGGGGQGAGQASNSGEG).

Belongs to the UPF0229 family.

The polypeptide is UPF0229 protein PST_0721 (Stutzerimonas stutzeri (strain A1501) (Pseudomonas stutzeri)).